Here is a 357-residue protein sequence, read N- to C-terminus: S-adenosylmethionine:tRNA ribosyltransferase-isomerase (357 aa).

It belongs to the QueA family. As to quaternary structure, monomer.

The protein resides in the cytoplasm. The catalysed reaction is 7-aminomethyl-7-carbaguanosine(34) in tRNA + S-adenosyl-L-methionine = epoxyqueuosine(34) in tRNA + adenine + L-methionine + 2 H(+). Its pathway is tRNA modification; tRNA-queuosine biosynthesis. Transfers and isomerizes the ribose moiety from AdoMet to the 7-aminomethyl group of 7-deazaguanine (preQ1-tRNA) to give epoxyqueuosine (oQ-tRNA). In Phenylobacterium zucineum (strain HLK1), this protein is S-adenosylmethionine:tRNA ribosyltransferase-isomerase.